Consider the following 91-residue polypeptide: N(2)-fixation sustaining protein CowN (91 aa).

This sequence belongs to the CowN family.

Functionally, is required to sustain N(2)-dependent growth in the presence of low levels of carbon monoxide (CO). Probably acts by protecting the N(2) fixation ability of the nitrogenase complex, which is inactivated in the presence of CO. The sequence is that of N(2)-fixation sustaining protein CowN from Gluconacetobacter diazotrophicus (strain ATCC 49037 / DSM 5601 / CCUG 37298 / CIP 103539 / LMG 7603 / PAl5).